We begin with the raw amino-acid sequence, 1026 residues long: Multidrug resistance protein MdtC (1026 aa).

12 helical membrane passes run 12–32, 333–353, 360–380, 387–407, 431–451, 463–483, 528–548, 853–873, 875–895, 897–917, 953–973, and 984–1004; these read VATLLLTLAIALCGVLGFRLL, EVEQSLVIAVALVILVVFLFL, AIPALAVPVSLIGTFAAMYLC, LSLMALTIATGFVVDDAIVVL, VGFTVLSMSLSLVAVFIPLLL, FAVTLSVAIMISLLISLTLTP, WVLLLLLGTIALNVWLYISIP, LLLILAAIITVYIVLGVLYES, VHPLTILSTLPSAGVGALLAL, WFGAPFSLVALIGIMLLIGIV, PIMMTTLAALFGALPLVLTSG, and ITIVGGLVMSQILTLYTTPVV.

Belongs to the resistance-nodulation-cell division (RND) (TC 2.A.6) family. MdtC subfamily. As to quaternary structure, part of a tripartite efflux system composed of MdtA, MdtB and MdtC. MdtC forms a heteromultimer with MdtB.

It localises to the cell inner membrane. This is Multidrug resistance protein MdtC from Pectobacterium carotovorum subsp. carotovorum (strain PC1).